Consider the following 114-residue polypeptide: Period circadian protein (114 aa).

Residues 23 to 114 (VTNTSIAGTG…VTLTESLLNK (92 aa)) are disordered. Tandem repeats lie at residues 30–31 (GT), 33–34 (GT), 36–37 (GT), 38–39 (GT), 40–41 (GT), 42–43 (GT), 44–45 (GT), 46–47 (GT), 48–49 (GT), 50–51 (GT), 52–53 (GT), 54–55 (GT), 56–57 (GT), and 58–59 (GT). The segment covering 30–79 (GTGGTGGTGTGTGTGTGTGTGTGTGTGTGTDTGTGTGTGTETGTGTGTGT) has biased composition (gly residues). Positions 30 to 87 (GTGGTGGTGTGTGTGTGTGTGTGTGTGTGTDTGTGTGTGTETGTGTGTGTRNGTNSGT) are 28 X 2 AA approximate tandem repeats of G-[TN]. Residues 60 to 61 (DT) form a 15; approximate repeat. 4 tandem repeats follow at residues 62–63 (GT), 64–65 (GT), 66–67 (GT), and 68–69 (GT). The stretch at 70 to 71 (ET) is one 20; approximate repeat. A run of 4 repeats spans residues 72-73 (GT), 74-75 (GT), 76-77 (GT), and 78-79 (GT). The 25; approximate repeat unit spans residues 80–81 (RN). Over residues 80–91 (RNGTNSGTKTGT) the composition is skewed to low complexity. Repeat unit 26 spans residues 82 to 83 (GT). The 27; approximate repeat unit spans residues 84–85 (NS). Residues 86–87 (GT) form repeat 28. The segment covering 105–114 (VTLTESLLNK) has biased composition (polar residues).

As to quaternary structure, forms a heterodimer with timeless (TIM); the complex then translocates into the nucleus. Phosphorylated with a circadian rhythmicity, probably by the double-time protein (dbt). Phosphorylation could be implicated in the stability of per monomer and in the formation of heterodimer per-tim.

Its subcellular location is the nucleus. It is found in the cytoplasm. The protein resides in the perinuclear region. Functionally, essential for biological clock functions. Determines the period length of circadian and ultradian rhythms; an increase in PER dosage leads to shortened circadian rhythms and a decrease leads to lengthened circadian rhythms. Essential for the circadian rhythmicity of locomotor activity, eclosion behavior, and for the rhythmic component of the male courtship song that originates in the thoracic nervous system. The biological cycle depends on the rhythmic formation and nuclear localization of the TIM-PER complex. Light induces the degradation of TIM, which promotes elimination of PER. Nuclear activity of the heterodimer coordinatively regulates PER and TIM transcription through a negative feedback loop. Behaves as a negative element in circadian transcriptional loop. Does not appear to bind DNA, suggesting indirect transcriptional inhibition. This chain is Period circadian protein (per), found in Drosophila orena (Fruit fly).